Consider the following 447-residue polypeptide: Beclin-2 (447 aa).

Residues 169 to 228 (EALHAELCAELSSLEQEEARLTQELEDLDGHHARVAAELRAAQAESKELYKQHEQHRVEY) adopt a coiled-coil conformation. The tract at residues 186–256 (EARLTQELED…NQLTYALSQQ (71 aa)) is required for homodimer formation.

Belongs to the beclin family. In terms of assembly, homodimer (via coiled-coil domain). Interacts (via coiled-coil domain) with ATG14 (via coiled-coil domain); this interaction is tighter than BECN2 self-association. Interacts with AMBRA1, UVRAG and PIK3C3/VPS34; these interactions are not disrupted by starvation. Does not interact with RUBCN. Interacts (via N-terminus) with GPRASP1/GASP1; the interaction is direct. As to expression, expressed in brain, skeletal muscle, placenta, thymus and uterus. Expressed at a lower level in liver, testis, stomach, and 17-day-old embryos.

It is found in the cytoplasm. Involved in 2 distinct lysosomal degradation pathways: acts as a regulator of autophagy and as a regulator of G-protein coupled receptors turnover. Regulates degradation in lysosomes of a variety of G-protein coupled receptors via its interaction with GPRASP1/GASP1. The sequence is that of Beclin-2 from Mus musculus (Mouse).